The chain runs to 863 residues: Leucine--tRNA ligase (863 aa).

Positions P42–H53 match the 'HIGH' region motif. A 'KMSKS' region motif is present at residues K635–S639. K638 serves as a coordination point for ATP.

Belongs to the class-I aminoacyl-tRNA synthetase family.

Its subcellular location is the cytoplasm. The catalysed reaction is tRNA(Leu) + L-leucine + ATP = L-leucyl-tRNA(Leu) + AMP + diphosphate. In Salinibacter ruber (strain DSM 13855 / M31), this protein is Leucine--tRNA ligase.